Consider the following 181-residue polypeptide: 3-hydroxyanthranilate 3,4-dioxygenase (181 aa).

R46 serves as a coordination point for O2. 3 residues coordinate Fe cation: H50, E56, and H95. E56 contributes to the substrate binding site. The substrate site is built by R99 and E109.

Belongs to the 3-HAO family. It depends on Fe(2+) as a cofactor.

It localises to the cytoplasm. The enzyme catalyses 3-hydroxyanthranilate + O2 = (2Z,4Z)-2-amino-3-carboxymuconate 6-semialdehyde. The protein operates within cofactor biosynthesis; NAD(+) biosynthesis; quinolinate from L-kynurenine: step 3/3. Functionally, catalyzes the oxidative ring opening of 3-hydroxyanthranilate to 2-amino-3-carboxymuconate semialdehyde, which spontaneously cyclizes to quinolinate. This chain is 3-hydroxyanthranilate 3,4-dioxygenase, found in Mycosarcoma maydis (Corn smut fungus).